A 70-amino-acid chain; its full sequence is DNA-directed RNA polymerase subunit omega (70 aa).

It belongs to the RNA polymerase subunit omega family. In terms of assembly, the RNAP catalytic core consists of 2 alpha, 1 beta, 1 beta' and 1 omega subunit. When a sigma factor is associated with the core the holoenzyme is formed, which can initiate transcription.

It catalyses the reaction RNA(n) + a ribonucleoside 5'-triphosphate = RNA(n+1) + diphosphate. Promotes RNA polymerase assembly. Latches the N- and C-terminal regions of the beta' subunit thereby facilitating its interaction with the beta and alpha subunits. The chain is DNA-directed RNA polymerase subunit omega from Shouchella clausii (strain KSM-K16) (Alkalihalobacillus clausii).